A 90-amino-acid polypeptide reads, in one-letter code: Inner kinetochore subunit MHF1 (90 aa).

This sequence belongs to the TAF9 family. CENP-S/MHF1 subfamily. In terms of assembly, the MHF histone-fold complex is a heterotetramer of 2 MHF1-MHF2 heterodimers. Together with MPH1/FANCM, forms the FANCM-MHF complex. Component of the inner kinetochore constitutive centromere-associated network (CCAN) (also known as central kinetochore CTF19 complex in yeast), which is composed of at least AME1, CHL4, CNN1, CTF3, CTF19, IML3, MCM16, MCM21, MCM22, MHF1, MHF2, MIF2, NKP1, NKP2, OKP1 and WIP1.

DsDNA-binding component of a FANCM-MHF complex involved in DNA damage repair and genome maintenance. FANCM-MHF promotes gene conversion at blocked replication forks, probably by reversal of the stalled fork. Component of the kinetochore, a multiprotein complex that assembles on centromeric DNA and attaches chromosomes to spindle microtubules, mediating chromosome segregation and sister chromatid segregation during meiosis and mitosis. Component of the inner kinetochore constitutive centromere-associated network (CCAN), which serves as a structural platform for outer kinetochore assembly. This is Inner kinetochore subunit MHF1 from Saccharomyces cerevisiae (strain ATCC 204508 / S288c) (Baker's yeast).